A 342-amino-acid chain; its full sequence is DNA repair protein RAD51 homolog 1 (342 aa).

The tract at residues 1-24 (MTTMEQRRNQNAVQQQDDEETQHG) is disordered. The 30-residue stretch at 51–80 (TVEGVAYTPRKDLLQIKGISDAKVDKIVEA) folds into the HhH domain. Residues 100–314 (QEIIQITSGS…LRKGRAEERI (215 aa)) form the FtsK domain. 130–137 (GEFRSGKT) contributes to the ATP binding site.

The protein belongs to the RecA family. RAD51 subfamily. Self-associates and interacts with XRCC3. Binds to RAD54/CHR25. Interacts with BRCA2A and BRCA2B. Can form a tripartite complex with both BRCA2B and DSS1(I). In terms of tissue distribution, detected in various tissues. Higher expression in reproductive tissues than in vegetative tissues, with the highest expression level in young flower buds. At cellular level, is expressed at low levels in flower primordia, then at higher levels in young anthers and at highest levels in both females and males meiocytes. Not detected in gametophytes.

Its subcellular location is the nucleus. Functionally, binds to single and double-stranded DNA and exhibits DNA-dependent ATPase activity. Unwinds duplex DNA. Component of the meiotic recombination pathway. Seems to play a role in mediating chromosome homology search, chromosome pairing and synapsis at early stages and probably chromosome crossing-over at later stages in meiosis. Probably is involved in the repair of meiotic double strand breaks (DBSs) generated by AtSPO11-1 and in homologous recombination. Its function is dispensable for vegetative growth and root mitosis. This is DNA repair protein RAD51 homolog 1 from Arabidopsis thaliana (Mouse-ear cress).